The chain runs to 355 residues: tRNA pseudouridine synthase D (355 aa).

The Nucleophile role is filled by Asp84. The TRUD domain maps to 160–306 (GVPNYFGLQR…MAHERRILRL (147 aa)).

It belongs to the pseudouridine synthase TruD family.

It catalyses the reaction uridine(13) in tRNA = pseudouridine(13) in tRNA. Its function is as follows. Responsible for synthesis of pseudouridine from uracil-13 in transfer RNAs. This chain is tRNA pseudouridine synthase D, found in Pseudomonas aeruginosa (strain UCBPP-PA14).